Reading from the N-terminus, the 131-residue chain is MADSLDRLYQAVLAARDLDPATSRTARLFQRGSGKMAKKLAEEAIEVVIDAVNGNREAVIRESADLLYNLTVLWASAGVRPEDVWAEMRRRENLLGIAEKLPKSRIGKPAAPHATRRPVIPQEARAVRKHR.

Positions 105–131 are disordered; that stretch reads RIGKPAAPHATRRPVIPQEARAVRKHR.

The protein belongs to the PRA-PH family.

It localises to the cytoplasm. It carries out the reaction 1-(5-phospho-beta-D-ribosyl)-ATP + H2O = 1-(5-phospho-beta-D-ribosyl)-5'-AMP + diphosphate + H(+). Its pathway is amino-acid biosynthesis; L-histidine biosynthesis; L-histidine from 5-phospho-alpha-D-ribose 1-diphosphate: step 2/9. This is Phosphoribosyl-ATP pyrophosphatase 2 (hisE2) from Rhodopseudomonas palustris (strain ATCC BAA-98 / CGA009).